The chain runs to 490 residues: Glutamyl-tRNA(Gln) amidotransferase subunit A (490 aa).

Active-site charge relay system residues include K76 and S151. Residue S175 is the Acyl-ester intermediate of the active site.

This sequence belongs to the amidase family. GatA subfamily. Heterotrimer of A, B and C subunits.

The enzyme catalyses L-glutamyl-tRNA(Gln) + L-glutamine + ATP + H2O = L-glutaminyl-tRNA(Gln) + L-glutamate + ADP + phosphate + H(+). Allows the formation of correctly charged Gln-tRNA(Gln) through the transamidation of misacylated Glu-tRNA(Gln) in organisms which lack glutaminyl-tRNA synthetase. The reaction takes place in the presence of glutamine and ATP through an activated gamma-phospho-Glu-tRNA(Gln). This Methylobacillus flagellatus (strain ATCC 51484 / DSM 6875 / VKM B-1610 / KT) protein is Glutamyl-tRNA(Gln) amidotransferase subunit A.